Consider the following 174-residue polypeptide: MTTIAAVRKDGVTALAGDGQVTLGEKVIMKGNAQKVRRIYHDQVVIGFAGGVADAFTLQDWFEKKLEHYAGNLRRSAVALAQDWRKDPTLQKLEAMMIVMDEHDLLLVSGSGEVIDPDEDVVAIGSGGNFAQAAAIAMLRHAPDMTPADIAKEAVNIAGNIDIFTNHNVIVESF.

Thr2 is an active-site residue. Na(+) contacts are provided by Gly159, Asp162, and Thr165.

Belongs to the peptidase T1B family. HslV subfamily. In terms of assembly, a double ring-shaped homohexamer of HslV is capped on each side by a ring-shaped HslU homohexamer. The assembly of the HslU/HslV complex is dependent on binding of ATP.

The protein resides in the cytoplasm. The catalysed reaction is ATP-dependent cleavage of peptide bonds with broad specificity.. Allosterically activated by HslU binding. In terms of biological role, protease subunit of a proteasome-like degradation complex believed to be a general protein degrading machinery. The sequence is that of ATP-dependent protease subunit HslV from Lacticaseibacillus casei (strain BL23) (Lactobacillus casei).